The following is a 350-amino-acid chain: tRNA uridine(34) hydroxylase (350 aa).

The 95-residue stretch at 146–240 (DDPDALFIDM…YARKARDQGL (95 aa)) folds into the Rhodanese domain. Cys-200 acts as the Cysteine persulfide intermediate in catalysis.

Belongs to the TrhO family.

The enzyme catalyses uridine(34) in tRNA + AH2 + O2 = 5-hydroxyuridine(34) in tRNA + A + H2O. Functionally, catalyzes oxygen-dependent 5-hydroxyuridine (ho5U) modification at position 34 in tRNAs, the first step in 5-carboxymethoxyuridine (cmo5U) biosynthesis. May be part of an alternate pathway, which is able to bypass cmo5U biogenesis in a subset of tRNAs under aerobic conditions. The chain is tRNA uridine(34) hydroxylase from Escherichia coli O6:K15:H31 (strain 536 / UPEC).